A 1009-amino-acid chain; its full sequence is DENN domain-containing protein 1A (1009 aa).

A uDENN domain is found at 13–145 (FEVYVEVAYP…HKLPIPDPGV (133 aa)). Residues 162-298 (ELPSIPENRN…VISSLKNRLK (137 aa)) form the cDENN domain. One can recognise a dDENN domain in the interval 300 to 378 (VSTTTGDGVA…DGRLDLLNSG (79 aa)). Positions 381 to 385 (FSDVF) match the FXDXF motif motif. The tract at residues 453–564 (DIAENGCAPT…TGPVPAPPDR (112 aa)) is disordered. Ser473 is modified (phosphoserine). The segment covering 477–489 (EAKDPKLREDRRP) has biased composition (basic and acidic residues). Basic residues predominate over residues 500-509 (PRPHVVKRPK). Thr519 carries the phosphothreonine modification. 5 positions are modified to phosphoserine: Ser520, Ser523, Ser536, Ser538, and Ser546. Residues 569–578 (DLLEDVFSNL) carry the Clathrin box motif. Phosphoserine is present on Ser592. The tract at residues 648–714 (IPSKPPAASP…RKTPELGIVP (67 aa)) is disordered. A Phosphoserine modification is found at Ser749. Disordered regions lie at residues 796–831 (STLPSRPATPNVATPFTPQFSFPPAGTPTPFPQPPL) and 928–1009 (RSSA…ETFE). 2 stretches are compositionally biased toward pro residues: residues 820–831 (AGTPTPFPQPPL) and 945–957 (GDPPLLPPRPPQG). Positions 972–983 (DPFEDLLQKTKQ) are enriched in basic and acidic residues. Low complexity predominate over residues 986–997 (SPSPALAPAPDS). The segment covering 999–1009 (EQLRKQWETFE) has biased composition (basic and acidic residues).

As to quaternary structure, interacts with RAB35. Interacts with clathrin and with the adapter protein complex 2, AP-2. Interacts with ITSN1 and SH3GL2. Interacts (when phosphorylated) with YWHAE. Phosphorylated on serine and/or threonine in an Akt-dependent manner. Phosphorylation probably regulates the guanine nucleotide exchange factor (GEF) activity, possibly by disrupting an intramolecular interaction between the DENN domain and the C-terminus of the protein, thereby relieving the autoinhibition.

It localises to the cytoplasmic vesicle. It is found in the clathrin-coated vesicle membrane. The protein localises to the presynaptic cell membrane. With respect to regulation, the guanine nucleotide exchange factor (GEF) activity is autoinhibited. Autoinhibition may be the result of intramolecular interaction between the DENN domain and the C-terminus, which is disrupted upon phosphorylation. Activation is regulated by Akt activation. In terms of biological role, guanine nucleotide exchange factor (GEF) regulating clathrin-mediated endocytosis through RAB35 activation. Promotes the exchange of GDP to GTP, converting inactive GDP-bound RAB35 into its active GTP-bound form. Regulates clathrin-mediated endocytosis of synaptic vesicles and mediates exit from early endosomes. Binds phosphatidylinositol-phosphates (PtdInsPs), with some preference for PtdIns(3)P. The sequence is that of DENN domain-containing protein 1A from Homo sapiens (Human).